The following is a 470-amino-acid chain: Ribulose bisphosphate carboxylase large chain (470 aa).

Lys5 carries the N6,N6,N6-trimethyllysine modification. The substrate site is built by Asn114 and Thr164. Residue Lys166 is the Proton acceptor of the active site. Residue Lys168 coordinates substrate. Mg(2+) contacts are provided by Lys192, Asp194, and Glu195. N6-carboxylysine is present on Lys192. His285 serves as the catalytic Proton acceptor. Residues Arg286, His318, and Ser370 each coordinate substrate.

This sequence belongs to the RuBisCO large chain family. Type I subfamily. In terms of assembly, heterohexadecamer of 8 large chains and 8 small chains; disulfide-linked. The disulfide link is formed within the large subunit homodimers. Requires Mg(2+) as cofactor. The disulfide bond which can form in the large chain dimeric partners within the hexadecamer appears to be associated with oxidative stress and protein turnover.

The protein localises to the plastid. Its subcellular location is the chloroplast. It carries out the reaction 2 (2R)-3-phosphoglycerate + 2 H(+) = D-ribulose 1,5-bisphosphate + CO2 + H2O. The catalysed reaction is D-ribulose 1,5-bisphosphate + O2 = 2-phosphoglycolate + (2R)-3-phosphoglycerate + 2 H(+). RuBisCO catalyzes two reactions: the carboxylation of D-ribulose 1,5-bisphosphate, the primary event in carbon dioxide fixation, as well as the oxidative fragmentation of the pentose substrate in the photorespiration process. Both reactions occur simultaneously and in competition at the same active site. This is Ribulose bisphosphate carboxylase large chain from Bertiera breviflora.